Here is a 1946-residue protein sequence, read N- to C-terminus: Chromodomain-helicase-DNA-binding protein 5 (1946 aa).

Disordered regions lie at residues 1–140 (MRGP…SGQL), 236–272 (VPQT…GRGK), and 285–340 (SKRK…GDGY). Composition is skewed to acidic residues over residues 17–37 (EEME…EGFE) and 72–90 (NDEM…ESEG). Composition is skewed to basic residues over residues 96-118 (TKKK…KRKK) and 254-272 (GVRK…GRGK). Acidic residues predominate over residues 293–303 (SEEDEREDSDL). Over residues 323 to 332 (KKNKRRRKKK) the composition is skewed to basic residues. 2 consecutive PHD-type zinc fingers follow at residues 345-392 (QDYC…CEKE) and 418-465 (MEFC…CTCP). The tract at residues 345 to 655 (QDYCEVCQQG…HRELMLGEDA (311 aa)) is histone-binding. Positions 499 to 556 (MPPPRPLEGIPEREFFVKWAGLSYWHCSWVKELQLELYHTVMYRNYQRKNDMDEPPPF) constitute a Chromo 1 domain. The interval 551–573 (DEPPPFDYGSGDEDGKSEKRKNK) is disordered. A compositionally biased stretch (basic and acidic residues) spans 563–573 (EDGKSEKRKNK). Residues 594–655 (MMVHRILNHS…HRELMLGEDA (62 aa)) form the Chromo 2 domain. One can recognise a Helicase ATP-binding domain in the interval 714-898 (RFSWAQGTDT…FHLLNFLTPE (185 aa)). 727 to 734 (DEMGLGKT) lines the ATP pocket. The DEAH box motif lies at 849–852 (DEAH). One can recognise a Helicase C-terminal domain in the interval 1030–1195 (LLQKMLKKLR…MTKQELDDIL (166 aa)). Disordered regions lie at residues 1210–1254 (MMSQ…VEDS), 1353–1413 (YNDA…LPPL), 1525–1566 (KYST…APLG), 1579–1696 (DEKE…EDKN), and 1926–1946 (SFPA…LQPF). Residues 1212-1230 (SQGQRPTTPIPDIQSTKGG) are compositionally biased toward polar residues. Acidic residues-rich tracts occupy residues 1357–1368 (SQEDQEWQDELS) and 1378–1387 (SEDEDEDFEE). Gln-1392 carries the post-translational modification N5-methylglutamine. Residues 1551 to 1564 (TPVPASPAQLPPAP) are compositionally biased toward pro residues. Residue Ser-1556 is modified to Phosphoserine. 3 stretches are compositionally biased toward basic and acidic residues: residues 1602–1629 (DRVE…EVEK), 1637–1654 (PLKE…DKPE), and 1661–1676 (GDFR…KEPG).

It belongs to the SNF2/RAD54 helicase family. Component of the nucleosome remodeling and deacetylase (NuRD) repressor complex, composed of core proteins MTA1, MTA2, MTA3, RBBP4, RBBP7, HDAC1, HDAC2, MBD2, MBD3, and peripherally associated proteins CDK2AP1, CDK2AP2, GATAD2A, GATAD2B, CHD3, CHD4 and CHD5. The exact stoichiometry of the NuRD complex is unknown, and some subunits such as MBD2 and MBD3, GATAD2A and GATAD2B, and CHD3, CHD4 and CHD5 define mutually exclusive NuRD complexes. Interacts with HDAC2. Methylated at Gln-1392 by N6AMT1. Specifically expressed by neurons in brain, retina and adrenal gland (at protein level). Also detected in testis.

The protein localises to the nucleus. It is found in the chromosome. The catalysed reaction is ATP + H2O = ADP + phosphate + H(+). ATP-dependent chromatin-remodeling factor that binds DNA through histones and regulates gene transcription. May specifically recognize and bind trimethylated 'Lys-27' (H3K27me3) and non-methylated 'Lys-4' of histone H3. Acts as a component of the histone deacetylase NuRD complex which participates in the remodeling of chromatin. Plays a role in the development of the nervous system by activating the expression of genes promoting neuron terminal differentiation. In parallel, it may also positively regulate the trimethylation of histone H3 at 'Lys-27' thereby specifically repressing genes that promote the differentiation into non-neuronal cell lineages. Regulates the expression of genes involved in cell proliferation and differentiation. Downstream activated genes may include CDKN2A that positively regulates the p53/TP53 pathway, which in turn, prevents cell proliferation. In spermatogenesis, it probably regulates histone hyperacetylation and the replacement of histones by transition proteins in chromatin, a crucial step in the condensation of spermatid chromatin and the production of functional spermatozoa. The polypeptide is Chromodomain-helicase-DNA-binding protein 5 (Chd5) (Mus musculus (Mouse)).